We begin with the raw amino-acid sequence, 339 residues long: 2-oxoisovalerate dehydrogenase subunit beta (339 aa).

As to quaternary structure, heterodimer of an alpha and a beta chain. It depends on thiamine diphosphate as a cofactor.

It carries out the reaction N(6)-[(R)-lipoyl]-L-lysyl-[protein] + 3-methyl-2-oxobutanoate + H(+) = N(6)-[(R)-S(8)-2-methylpropanoyldihydrolipoyl]-L-lysyl-[protein] + CO2. Its function is as follows. The branched-chain alpha-keto dehydrogenase complex catalyzes the overall conversion of alpha-keto acids to acyl-CoA and CO(2). It contains multiple copies of three enzymatic components: branched-chain alpha-keto acid decarboxylase (E1), lipoamide acyltransferase (E2) and lipoamide dehydrogenase (E3). The polypeptide is 2-oxoisovalerate dehydrogenase subunit beta (bkdA2) (Pseudomonas putida (Arthrobacter siderocapsulatus)).